The following is a 3661-amino-acid chain: MSRRAPGSRLSSGGGGGGTKYPRSWNDWQPRTDSASADPDNLKYSSSRDRGGSSSYGLQPSNSAVVSRQRHDDTRVHADIQNDEKGGYSVNGGSGENTYGRKSLGQELRVNNVTSPEFTSVQHGSRALATKDMRKSQERSMSYSDESRLSNLLRRITREDDRDRRLATVKQLKEFIQQPENKLVLVKQLDNILAAVHDVLNESSKLLQELRQEGACCLGLLCASLSYEAEKIFKWIFSKFSSSAKDEVKLLYLCATYKALETVGEKKAFSSVMQLVMTSLQSILENVDTPELLCKCVKCILLVARCYPHIFSTNFRDTVDILVGWHIDHTQKPSLTQQVSGWLQSLEPFWVADLAFSTTLLGQFLEDMEAYAEDLSHVASGESVDEDVPPPSVSLPKLAALLRVFSTVVRSIGERFSPIRGPPITEAYVTDVLYRVMRCVTAANQVFFSEAVLTAANECVGVLLGSLDPSMTIHCDMVITYGLDQLENCQTCGTDYIISVLNLLTLIVEQINTKLPSSFVEKLFIPSSKLLFLRYHKEKEVVAVAHAVYQAVLSLKNIPVLETAYKLILGEMTCALNNLLHSLQLPEACSEIKHEAFKNHVFNVDNAKFVVIFDLSALTTIGNAKNSLIGMWALSPTVFALLSKNLMIVHSDLAVHFPAIQYAVLYTLYSHCTRHDHFISSSLSSSSPSLFDGAVISTVTTATKKHFSIILNLLGILLKKDNLNQDTRKLLMTWALEAAVLMKKSETYAPLFSLPSFHKFCKGLLANTLVEDVNICLQACSSLHALSSSLPDDLLQRCVDVCRVQLVHSGTRIRQAFGKLLKSIPLDVVLSNNNHTEIQEISLALRSHMSKAPSNTFHPQDFSDVISFILYGNSHRTGKDNWLERLFYSCQRLDKRDQSTIPRNLLKTDAVLWQWAIWEAAQFTVLSKLRTPLGRAQDTFQTIEGIIRSLAAHTLNPDQDVSQWTTADNDEGHGNNQLRLVLLLQYLENLEKLMYNAYEGCANALTSPPKVIRTFFYTNRQTCQDWLTRIRLSIMRVGLLAGQPAVTVRHGFDLLTEMKTTSLSQGNELEVTIMMVVEALCELHCPEAIQGIAVWSSSIVGKNLLWINSVAQQAEGRFEKASVEYQEHLCAMTGVDCCISSFDKSVLTLANAGRNSASPKHSLNGESRKTVLSKPTDSSPEVINYLGNKACECYISIADWAAVQEWQNAIHDLKKSTSSTSLNLKADFNYIKSLSSFESGKFVECTEQLELLPGENINLLAGGSKEKIDMKKLLPNMLSPDPRELQKSIEVQLLRSSVCLATALNPIEQDQKWQSITENVVKYLKQTSRIAIGPLRLSTLTVSQSLPVLSTLQLYCSSALENTVSNRLSTEDCLIPLFSEALRSCKQHDVRPWMQALRYTMYQNQLLEKIKEQTVPIRSHLMELGLTAAKFARKRGNVSLATRLLAQCSEVQLGKTTTAQDLVQHFKKLSTQGQVDEKWGPELDIEKTKLLYTAGQSTHAMEMLSSCAISFCKSVKAEYAVAKSILTLAKWIQAEWKEISGQLKQVYRAQHQQNFTGLSTLSKNILTLIELPSVNTMEEEYPRIESESTVHIGVGEPDFILGQLYHLSSVQAPEVAKSWAALASWAYRWGRKVVDNASQGEGVRLLPREKSEVQNLLPDTITEEEKERIYGILGQAVCRPAGIQDEDITLQITESEDNEEDDMVDVIWRQLISSCPWLSELDESATEGVIKVWRKVVDRIFSLYKLSCSAYFTFLKLNAGQIPLDEDDPRLHLSHRVEQSTDDMIVMATLRLLRLLVKHAGELRQYLEHGLETTPTAPWRGIIPQLFSRLNHPEVYVRQSICNLLCRVAQDSPHLILYPAIVGTISLSSESQASGNKFSTAIPTLLGNIQGEELLVSECEGGSPPASQDSNKDEPKSGLNEDQAMMQDCYSKIVDKLSSANPTMVLQVQMLVAELRRVTVLWDELWLGVLLQQHMYVLRRIQQLEDEVKRVQNNNTLRKEEKIAIMREKHTALMKPIVFALEHVRSITAAPAETPHEKWFQDNYGDAIENALEKLKTPLNPAKPGSSWIPFKEIMLSLQQRAQKRASYILRLEEISPWLAAMTNTEIALPGEVSARDTVTIHSVGGTITILPTKTKPKKLLFLGSDGKSYPYLFKGLEDLHLDERIMQFLSIVNTMFATINRQETPRFHARHYSVTPLGTRSGLIQWVDGATPLFGLYKRWQQREAALQAQKAQDSYQTPQNPGIVPRPSELYYSKIGPALKTVGLSLDVSRRDWPLHVMKAVLEELMEATPPNLLAKELWSSCTTPDEWWRVTQSYARSTAVMSMVGYIIGLGDRHLDNVLIDMTTGEVVHIDYNVCFEKGKSLRVPEKVPFRMTQNIETALGVTGVEGVFRLSCEQVLHIMRRGRETLLTLLEAFVYDPLVDWTAGGEAGFAGAVYGGGGQQAESKQSKREMEREITRSLFSSRVAEIKVNWFKNRDEMLVVLPKLDGSLDEYLSLQEQLTDVEKLQGKLLEEIEFLEGAEGVDHPSHTLQHRYSEHTQLQTQQRAVQEAIQVKLNEFEQWITHYQAAFNNLEATQLASLLQEISTQMDLGPPSYVPATAFLQNAGQAHLISQCEQLEGEVGALLQQRRSVLRGCLEQLHHYATVALQYPKAIFQKHRIEQWKTWMEELICNTTVERCQELYRKYEMQYAPQPPPTVCQFITATEMTLQRYAADINSRLIRQVERLKQEAVTVPVCEDQLKEIERCIKVFLHENGEEGSLSLASVIISALCTLTRRNLMMEGAASSAGEQLVDLTSRDGAWFLEELCSMSGNVTCLVQLLKQCHLVPQDLDIPNPMEASETVHLANGVYTSLQELNSNFRQIIFPEALRCLMKGEYTLESMLHELDGLIEQTTDGVPLQTLVESLQAYLRNAAMGLEEETHAHYIDVARLLHAQYGELIQPRNGSVDETPKMSAGQMLLVAFDGMFAQVETAFSLLVEKLNKMEIPIAWRKIDIIREARSTQVNFFDDDNHRQVLEEIFFLKRLQTIKEFFRLCGTFSKTLSGSSSLEDQNTVNGPVQIVNVKTLFRNSCFSEDQMAKPIKAFTADFVRQLLIGLPNQALGLTLCSFISALGVDIIAQVEAKDFGAESKVSVDDLCKKAVEHNIQIGKFSQLVMNRATVLASSYDTAWKKHDLVRRLETSISSCKTSLQRVQLHIAMFQWQHEDLLINRPQAMSVTPPPRSAILTSMKKKLHTLSQIETSIATVQEKLAALESSIEQRLKWAGGANPALAPVLQDFEATIAERRNLVLKESQRASQVTFLCSNIIHFESLRTRTAEALNLDAALFELIKRCQQMCSFASQFNSSVSELELRLLQRVDTGLEHPIGSSEWLLSAHKQLTQDMSTQRAIQTEKEQQIETVCETIQNLVDNIKTVLTGHNRQLGDVKHLLKAMAKDEEAALADGEDVPYENSVRQFLGEYKSWQDNIQTVLFTLVQAMGQVRSQEHVEMLQEITPTLKELKTQSQSIYNNLVSFASPLVTDATNECSSPTSSATYQPSFAAAVRSNTGQKTQPDVMSQNARKLIQKNLATSADTPPSTVPGTGKSVACSPKKAVRDPKTGKAVQERNSYAVSVWKRVKAKLEGRDVDPNRRMSVAEQVDYVIKEATNLDNLAQLYEGWTAWV.

A compositionally biased stretch (low complexity) spans 1–11; sequence MSRRAPGSRLS. Disordered regions lie at residues 1 to 101 and 116 to 144; these read MSRR…TYGR and PEFTSVQHGSRALATKDMRKSQERSMSYS. Residues 1–1977 are interaction with SMG8 and SMG9; sequence MSRRAPGSRL…GVLLQQHMYV (1977 aa). A compositionally biased stretch (polar residues) spans 26–35; the sequence is NDWQPRTDSA. Composition is skewed to basic and acidic residues over residues 69 to 86 and 129 to 138; these read QRHDDTRVHADIQNDEKG and ATKDMRKSQE. K173 carries the post-translational modification N6-acetyllysine. Residues 1154 to 1165 are compositionally biased toward polar residues; sequence RNSASPKHSLNG. The segment at 1154–1175 is disordered; it reads RNSASPKHSLNGESRKTVLSKP. The 584-residue stretch at 1283-1866 folds into the FAT domain; sequence RELQKSIEVQ…LYPAIVGTIS (584 aa). Residues 1817–1852 form an HEAT repeat; sequence APWRGIIPQLFSRLNHPEVYVRQSICNLLCRVAQDS. A disordered region spans residues 1898 to 1919; it reads ECEGGSPPASQDSNKDEPKSGL. Residues 2124 to 2463 form the PI3K/PI4K catalytic domain; it reads VGGTITILPT…MEREITRSLF (340 aa). Positions 2130–2136 are G-loop; it reads ILPTKTK. The catalytic loop stretch occupies residues 2332-2340; that stretch reads GLGDRHLDN. Positions 2352 to 2376 are activation loop; it reads HIDYNVCFEKGKSLRVPEKVPFRMT. Position 3550 is a phosphothreonine (T3550). S3556 and S3570 each carry phosphoserine. Over residues 3568–3579 the composition is skewed to polar residues; that stretch reads ATSADTPPSTVP. The interval 3568–3591 is disordered; sequence ATSADTPPSTVPGTGKSVACSPKK. Phosphothreonine occurs at positions 3573 and 3577. The FATC domain maps to 3629 to 3661; it reads RRMSVAEQVDYVIKEATNLDNLAQLYEGWTAWV.

Belongs to the PI3/PI4-kinase family. Component of the SMG1C complex composed of SMG1, SMG8 and SMG9; the recruitment of SMG8 to SMG1 N-terminus induces a large conformational change in the SMG1 C-terminal head domain containing the catalytic domain. Component of the transient SURF (SMG1-UPF1-eRF1-eRF3) complex. Part of a complex composed of SMG1, DHX34 and UPF1; within the complex DHX34 acts as a scaffolding protein to facilitate SMG1 phosphorylation of UPF1. Interacts with PRKCI. Interacts with TELO2 and TTI1. Interacts with RUVBL1 and RUVBL2. Interacts with UPF2. Interacts with DHX34 (via C-terminus); the interaction is RNA-independent. Mn(2+) is required as a cofactor. In terms of processing, autophosphorylated. In terms of tissue distribution, widely expressed, with highest level in heart and skeletal muscle. Expressed in placenta, brain, lung and spleen, but not in liver.

It is found in the nucleus. It localises to the cytoplasm. The enzyme catalyses L-seryl-[protein] + ATP = O-phospho-L-seryl-[protein] + ADP + H(+). The catalysed reaction is L-threonyl-[protein] + ATP = O-phospho-L-threonyl-[protein] + ADP + H(+). With respect to regulation, inhibited by caffeine, LY294002 and wortmannin. Its function is as follows. Serine/threonine protein kinase involved in both mRNA surveillance and genotoxic stress response pathways. Recognizes the substrate consensus sequence [ST]-Q. Plays a central role in nonsense-mediated decay (NMD) of mRNAs containing premature stop codons by phosphorylating UPF1/RENT1. Recruited by release factors to stalled ribosomes together with SMG8 and SMG9 (forming the SMG1C protein kinase complex), and UPF1 to form the transient SURF (SMG1-UPF1-eRF1-eRF3) complex. In EJC-dependent NMD, the SURF complex associates with the exon junction complex (EJC) through UPF2 and allows the formation of an UPF1-UPF2-UPF3 surveillance complex which is believed to activate NMD. Also acts as a genotoxic stress-activated protein kinase that displays some functional overlap with ATM. Can phosphorylate p53/TP53 and is required for optimal p53/TP53 activation after cellular exposure to genotoxic stress. Its depletion leads to spontaneous DNA damage and increased sensitivity to ionizing radiation (IR). May activate PRKCI but not PRKCZ. The chain is Serine/threonine-protein kinase SMG1 from Homo sapiens (Human).